The primary structure comprises 367 residues: Peptide chain release factor 2 (367 aa).

N5-methylglutamine is present on Gln249.

This sequence belongs to the prokaryotic/mitochondrial release factor family. Methylated by PrmC. Methylation increases the termination efficiency of RF2.

The protein localises to the cytoplasm. Its function is as follows. Peptide chain release factor 2 directs the termination of translation in response to the peptide chain termination codons UGA and UAA. The chain is Peptide chain release factor 2 from Pseudothermotoga lettingae (strain ATCC BAA-301 / DSM 14385 / NBRC 107922 / TMO) (Thermotoga lettingae).